A 317-amino-acid chain; its full sequence is Glutaminase (317 aa).

Residues S67, N118, E162, N169, Y193, Y245, and V263 each contribute to the substrate site.

This sequence belongs to the glutaminase family. In terms of assembly, homotetramer.

The catalysed reaction is L-glutamine + H2O = L-glutamate + NH4(+). This chain is Glutaminase, found in Brucella canis (strain ATCC 23365 / NCTC 10854 / RM-666).